The chain runs to 266 residues: Auxin-responsive protein IAA21 (266 aa).

The EAR-like (transcriptional repression) motif lies at 24-28 (LRLGL). The interval 27-50 (GLPGTAEEAESEGGGGGGTDAAPL) is disordered. The PB1 domain occupies 146-248 (CLYVKVSMDG…SCRRLRIMKG (103 aa)).

It belongs to the Aux/IAA family. In terms of assembly, homodimers and heterodimers. In terms of tissue distribution, highly expressed in flowers. Expressed in roots and seedlings.

It localises to the nucleus. Functionally, aux/IAA proteins are short-lived transcriptional factors that function as repressors of early auxin response genes at low auxin concentrations. This is Auxin-responsive protein IAA21 (IAA21) from Oryza sativa subsp. japonica (Rice).